The chain runs to 497 residues: tRNA (adenine(58)-N(1))-methyltransferase non-catalytic subunit TRM6 (497 aa).

The interval 69-102 (TNGGSLQPKKKKEEPTSETKEAGTDNRNIIDDGK) is disordered. Residues 79–102 (KKEEPTSETKEAGTDNRNIIDDGK) show a composition bias toward basic and acidic residues. Residues 94–104 (NRNIIDDGKSQ) are substrate. Residue threonine 107 is modified to Phosphothreonine. Substrate stretches follow at residues 145-154 (KYIKKKKKKY) and 175-182 (REPGKINH). Positions 276–354 (SSEPKDIASV…EKQRRQEEQK (79 aa)) are disordered. Serine 298 and serine 305 each carry phosphoserine. The segment covering 311-354 (ESNHPEEQERMEIVSQDPDYKEPKESGSKKDYIQEKQRRQEEQK) has biased composition (basic and acidic residues). Residues arginine 349 and arginine 377 each contribute to the substrate site. Substrate regions lie at residues 415–423 (RERGGVINL) and 434–441 (QVLPDRSH). Residues 468 to 497 (PSLKSSTSTLESHKTEEPAAKKRKCPESDS) form a disordered region. A compositionally biased stretch (basic and acidic residues) spans 478 to 497 (ESHKTEEPAAKKRKCPESDS).

The protein belongs to the TRM6/GCD10 family. Heterotetramer; composed of two copies of TRMT6 and two copies of TRMT61A.

The protein localises to the nucleus. Its function is as follows. Substrate-binding subunit of tRNA (adenine-N(1)-)-methyltransferase, which catalyzes the formation of N(1)-methyladenine at position 58 (m1A58) in initiator methionyl-tRNA. Together with the TRMT61A catalytic subunit, part of a mRNA N(1)-methyltransferase complex that mediates methylation of adenosine residues at the N(1) position of a small subset of mRNAs: N(1) methylation takes place in tRNA T-loop-like structures of mRNAs and is only present at low stoichiometries. This Bos taurus (Bovine) protein is tRNA (adenine(58)-N(1))-methyltransferase non-catalytic subunit TRM6 (TRMT6).